The primary structure comprises 594 residues: Potassium-transporting ATPase potassium-binding subunit (594 aa).

The next 10 helical transmembrane spans lie at 3 to 23, 67 to 87, 136 to 156, 179 to 199, 287 to 307, 314 to 334, 415 to 435, 453 to 473, 519 to 539, and 562 to 582; these read ADFL…APLL, AVAM…LQRL, ALTV…IALV, LYVL…QGVV, LEML…GEMV, VAIL…AAYF, GLYG…LMIG, VALV…VAVL, VLLG…ILAL, and LFVA…YVPA.

It belongs to the KdpA family. In terms of assembly, the system is composed of three essential subunits: KdpA, KdpB and KdpC.

It is found in the cell inner membrane. Part of the high-affinity ATP-driven potassium transport (or Kdp) system, which catalyzes the hydrolysis of ATP coupled with the electrogenic transport of potassium into the cytoplasm. This subunit binds the periplasmic potassium ions and delivers the ions to the membrane domain of KdpB through an intramembrane tunnel. This is Potassium-transporting ATPase potassium-binding subunit from Bordetella parapertussis (strain 12822 / ATCC BAA-587 / NCTC 13253).